Here is a 506-residue protein sequence, read N- to C-terminus: Sugar transport protein 5 (506 aa).

The Cytoplasmic portion of the chain corresponds to 1 to 19; it reads MAGGGLALDVSSAGNIDAK. The next 12 membrane-spanning stretches (helical) occupy residues 20-40, 81-101, 117-137, 141-161, 168-188, 201-221, 287-307, 325-345, 352-372, 390-410, 430-450, and 456-476; these read ITAA…IFGY, LLTA…LVAS, GFTF…AMLI, ILLG…LSEV, GAFN…ANLI, ISLG…LFIS, LVVA…VNAF, IATF…TMVI, FLFI…AVLL, VTVV…WGPL, LSVA…LATL, and GAFL…IMFL. Residues 477–506 lie on the Cytoplasmic side of the membrane; the sequence is PETKGIPVDSMYQVWEKHWYWQRFTKPTST.

The protein belongs to the major facilitator superfamily. Sugar transporter (TC 2.A.1.1) family.

It is found in the membrane. Functionally, mediates an active uptake of hexoses, probably by sugar/hydrogen symport. In Arabidopsis thaliana (Mouse-ear cress), this protein is Sugar transport protein 5 (STP5).